The following is a 290-amino-acid chain: Ribosomal RNA small subunit methyltransferase A (290 aa).

Positions 27, 29, 54, 75, 100, and 125 each coordinate S-adenosyl-L-methionine.

The protein belongs to the class I-like SAM-binding methyltransferase superfamily. rRNA adenine N(6)-methyltransferase family. RsmA subfamily.

The protein resides in the cytoplasm. The catalysed reaction is adenosine(1518)/adenosine(1519) in 16S rRNA + 4 S-adenosyl-L-methionine = N(6)-dimethyladenosine(1518)/N(6)-dimethyladenosine(1519) in 16S rRNA + 4 S-adenosyl-L-homocysteine + 4 H(+). Specifically dimethylates two adjacent adenosines (A1518 and A1519) in the loop of a conserved hairpin near the 3'-end of 16S rRNA in the 30S particle. May play a critical role in biogenesis of 30S subunits. The protein is Ribosomal RNA small subunit methyltransferase A of Streptococcus pneumoniae (strain JJA).